The primary structure comprises 718 residues: Exostosin-2 (718 aa).

Residues 1–25 lie on the Cytoplasmic side of the membrane; that stretch reads MCASVKYNIRGPALIPRMKTKHRIY. A helical; Signal-anchor for type II membrane protein transmembrane segment spans residues 26–46; the sequence is YITLFSIVLLGLIATGMFQFW. At 47–718 the chain is on the lumenal side; sequence PHSIESSNDW…LKSFPNIGSL (672 aa). Intrachain disulfides connect C85–C90, C96–C151, C286–C300, and C318–C339. The N-linked (GlcNAc...) asparagine glycan is linked to N288. UDP-binding residues include L461, R465, N490, and N517. R465, N490, N517, R522, D538, D539, and D540 together coordinate UDP-N-acetyl-alpha-D-glucosamine. UDP contacts are provided by D538 and D539. Residue D540 coordinates Mn(2+). Residues Y582 and S584 each contribute to the a protein site. C626 and C676 are joined by a disulfide. 2 residues coordinate UDP-N-acetyl-alpha-D-glucosamine: E627 and D628. The N-linked (GlcNAc...) asparagine glycan is linked to N637. Residues K651 and K653 each contribute to the a protein site. R673 is a UDP-N-acetyl-alpha-D-glucosamine binding site.

It belongs to the glycosyltransferase 47 family. In terms of assembly, part of the heparan sulfate polymerase, a dimeric complex composed of EXT1 and EXT2. Could also form homooligomeric complexes. Interacts with NDST1. Interacts with GALNT5. It depends on Mn(2+) as a cofactor. In terms of processing, N-glycosylated at Asn-637. Post-translationally, a soluble form is generated by proteolytic processing. As to expression, widely expressed.

It localises to the golgi apparatus membrane. It is found in the golgi apparatus. The protein localises to the cis-Golgi network membrane. The protein resides in the endoplasmic reticulum membrane. Its subcellular location is the secreted. The catalysed reaction is 3-O-{[(1-&gt;4)-beta-D-GlcA-(1-&gt;4)-alpha-D-GlcNAc](n)-(1-&gt;4)-beta-D-GlcA-(1-&gt;3)-beta-D-Gal-(1-&gt;3)-beta-D-Gal-(1-&gt;4)-beta-D-Xyl}-L-seryl-[protein] + UDP-N-acetyl-alpha-D-glucosamine = 3-O-{alpha-D-GlcNAc-[(1-&gt;4)-beta-D-GlcA-(1-&gt;4)-alpha-D-GlcNAc](n)-(1-&gt;4)-beta-D-GlcA-(1-&gt;3)-beta-D-Gal-(1-&gt;3)-beta-D-Gal-(1-&gt;4)-beta-D-Xyl}-L-seryl-[protein] + UDP + H(+). It functions in the pathway protein modification; protein glycosylation. In terms of biological role, glycosyltransferase forming with EXT1 the heterodimeric heparan sulfate polymerase which catalyzes the elongation of the heparan sulfate glycan backbone. Glycan backbone extension consists in the alternating transfer of (1-&gt;4)-beta-D-GlcA and (1-&gt;4)-alpha-D-GlcNAc residues from their respective UDP-sugar donors. Both EXT1 and EXT2 are required for the full activity of the polymerase since EXT1 bears the N-acetylglucosaminyl-proteoglycan 4-beta-glucuronosyltransferase activity within the complex while EXT2 carries the glucuronosyl-N-acetylglucosaminyl-proteoglycan 4-alpha-N-acetylglucosaminyltransferase activity. Heparan sulfate proteoglycans are ubiquitous components of the extracellular matrix and play an important role in tissue homeostasis and signaling. In Homo sapiens (Human), this protein is Exostosin-2.